The chain runs to 287 residues: Putative ABC transporter ATP-binding protein MM_1038 (287 aa).

The ABC transporter domain maps to 5–238 (LENISVFYSR…ENVPLPPVAS (234 aa)). ATP is bound at residue 40–47 (GEKGAGKS).

This sequence belongs to the ABC transporter superfamily.

The protein resides in the cell membrane. Functionally, probably part of an ABC transporter complex. Responsible for energy coupling to the transport system. The protein is Putative ABC transporter ATP-binding protein MM_1038 of Methanosarcina mazei (strain ATCC BAA-159 / DSM 3647 / Goe1 / Go1 / JCM 11833 / OCM 88) (Methanosarcina frisia).